The sequence spans 263 residues: Phosphatidylglycerol--prolipoprotein diacylglyceryl transferase (263 aa).

Helical transmembrane passes span 6-26 (VIFSIGPVSIYWYSLAYVLGI), 50-70 (LLTATIVGIILGGRLGYVLIY), 85-105 (TWEGGMSFHGGAIGVLLAVII), and 112-132 (IPTFYALDLVSCGVPIGLFLG). A 1,2-diacyl-sn-glycero-3-phospho-(1'-sn-glycerol) is bound at residue R133. Transmembrane regions (helical) follow at residues 169 to 189 (LYEALFEGLLLFAVANSLFFL), 197 to 217 (GALTGIAVMWYGIARFFVEFF), and 233 to 253 (MGQLLSIPMVLLGMLVYLGAL).

It belongs to the Lgt family.

The protein localises to the cell membrane. It carries out the reaction L-cysteinyl-[prolipoprotein] + a 1,2-diacyl-sn-glycero-3-phospho-(1'-sn-glycerol) = an S-1,2-diacyl-sn-glyceryl-L-cysteinyl-[prolipoprotein] + sn-glycerol 1-phosphate + H(+). The protein operates within protein modification; lipoprotein biosynthesis (diacylglyceryl transfer). In terms of biological role, catalyzes the transfer of the diacylglyceryl group from phosphatidylglycerol to the sulfhydryl group of the N-terminal cysteine of a prolipoprotein, the first step in the formation of mature lipoproteins. The polypeptide is Phosphatidylglycerol--prolipoprotein diacylglyceryl transferase (Wolbachia pipientis wMel).